Reading from the N-terminus, the 321-residue chain is Necdin (321 aa).

The disordered stretch occupies residues 1 to 96; sequence MSEQSKDLSD…QPGPAPPAPA (96 aa). A compositionally biased stretch (low complexity) spans 20–35; sequence SEVHSSPGVSEGVPPS. In terms of domain architecture, MAGE spans 98–297; it reads LVQKAHELMW…QAWPSRYREA (200 aa).

Binds to the transactivation domains of E2F1 and p53. Binds also SV40 large T antigen and adenovirus E1A. Interacts with nucleobindin 1 and 2. In terms of tissue distribution, almost ubiquitous. Detected in fetal brain, lung, liver and kidney; in adult heart, brain, placenta, lung, liver, skeletal muscle, kidney, pancreas, spleen, thymus, prostate, testis, ovary, small intestine and colon. Not detected in peripheral blood leukocytes. In brain, restricted to post-mitotic neurons.

Its subcellular location is the perikaryon. The protein localises to the nucleus. Its function is as follows. Growth suppressor that facilitates the entry of the cell into cell cycle arrest. Functionally similar to the retinoblastoma protein it binds to and represses the activity of cell-cycle-promoting proteins such as SV40 large T antigen, adenovirus E1A, and the transcription factor E2F. Necdin also interacts with p53 and works in an additive manner to inhibit cell growth. Also functions as a transcription factor and directly binds to specific guanosine-rich DNA sequences. In Homo sapiens (Human), this protein is Necdin (NDN).